Reading from the N-terminus, the 656-residue chain is Leucine aminopeptidase 2 (656 aa).

Substrate is bound by residues 173 to 175 (QLE) and 302 to 307 (PYGGME). His331 is a Zn(2+) binding site. Catalysis depends on Glu332, which acts as the Proton acceptor. His335 and Glu354 together coordinate Zn(2+). Residue Tyr420 is the Proton donor of the active site.

The protein belongs to the peptidase M1 family. Zn(2+) serves as cofactor.

Its subcellular location is the cytoplasm. It is found in the nucleus. It catalyses the reaction an epoxide + H2O = an ethanediol. In terms of biological role, aminopeptidase that preferentially cleaves di- and tripeptides. Also has low epoxide hydrolase activity (in vitro). Can hydrolyze the epoxide leukotriene LTA(4) but it forms preferentially 5,6-dihydroxy-7,9,11,14-eicosatetraenoic acid rather than the cytokine leukotriene B(4) as the product compared to the homologous mammalian enzyme (in vitro). The chain is Leucine aminopeptidase 2 from Vanderwaltozyma polyspora (strain ATCC 22028 / DSM 70294 / BCRC 21397 / CBS 2163 / NBRC 10782 / NRRL Y-8283 / UCD 57-17) (Kluyveromyces polysporus).